Reading from the N-terminus, the 258-residue chain is Flagellin B3 (258 aa).

The propeptide occupies 1–8; the sequence is MRFLKKRG.

Belongs to the archaeal flagellin family.

It localises to the archaeal flagellum. Functionally, flagellin is the subunit protein which polymerizes to form the filaments of archaeal flagella. In Thermococcus kodakarensis (strain ATCC BAA-918 / JCM 12380 / KOD1) (Pyrococcus kodakaraensis (strain KOD1)), this protein is Flagellin B3 (flaB3).